The sequence spans 414 residues: tRNA dimethylallyltransferase (414 aa).

Ala33–Thr40 contacts ATP. Thr35–Thr40 contacts substrate. Interaction with substrate tRNA regions lie at residues Asp58–Leu61, Gln182–Arg186, and Arg266–Arg271.

The protein belongs to the IPP transferase family. As to quaternary structure, monomer. Mg(2+) serves as cofactor.

It catalyses the reaction adenosine(37) in tRNA + dimethylallyl diphosphate = N(6)-dimethylallyladenosine(37) in tRNA + diphosphate. Functionally, catalyzes the transfer of a dimethylallyl group onto the adenine at position 37 in tRNAs that read codons beginning with uridine, leading to the formation of N6-(dimethylallyl)adenosine (i(6)A). The sequence is that of tRNA dimethylallyltransferase from Psychrobacter cryohalolentis (strain ATCC BAA-1226 / DSM 17306 / VKM B-2378 / K5).